Reading from the N-terminus, the 168-residue chain is uncharacterized protein (168 aa).

Positions 14–168 (IDIPLLDAAS…EYKHWIYVTK (155 aa)) constitute an N-acetyltransferase domain.

The protein belongs to the acetyltransferase family.

This is an uncharacterized protein from Bacillus subtilis (strain 168).